The sequence spans 226 residues: Ribosomal RNA small subunit methyltransferase Nep1 (226 aa).

S-adenosyl-L-methionine is bound by residues Gly176, Gly181, and 197-202 (IYEESL).

This sequence belongs to the class IV-like SAM-binding methyltransferase superfamily. RNA methyltransferase NEP1 family. In terms of assembly, homodimer.

It catalyses the reaction a pseudouridine in rRNA + S-adenosyl-L-methionine = an N(1)-methylpseudouridine in rRNA + S-adenosyl-L-homocysteine + H(+). Methyltransferase involved in ribosomal biogenesis. Specifically catalyzes the N1-methylation of the pseudouridine corresponding to position 914 in M.jannaschii 16S rRNA. This is Ribosomal RNA small subunit methyltransferase Nep1 from Methanothrix thermoacetophila (strain DSM 6194 / JCM 14653 / NBRC 101360 / PT) (Methanosaeta thermophila).